The chain runs to 184 residues: GTP cyclohydrolase 1 (184 aa).

3 residues coordinate Zn(2+): cysteine 75, histidine 78, and cysteine 146.

Belongs to the GTP cyclohydrolase I family. Homomer.

It catalyses the reaction GTP + H2O = 7,8-dihydroneopterin 3'-triphosphate + formate + H(+). It functions in the pathway cofactor biosynthesis; 7,8-dihydroneopterin triphosphate biosynthesis; 7,8-dihydroneopterin triphosphate from GTP: step 1/1. This is GTP cyclohydrolase 1 from Streptococcus pneumoniae (strain Taiwan19F-14).